Reading from the N-terminus, the 161-residue chain is MHHQHGLFMLALLAFLLVMTVLGTDTGKKDKQEKKVKKSDCGDWQWSVCVPTSGDCGLGTREGTRSGKECKQTIKTQKCKIPCNWKKQFGAECKYQFQEWGDCDPETGLKTRNGNLKRALHNAECQKTVTLSKPCGKVTKPKLQESKKKKKEGKNKEKLLD.

The N-terminal stretch at 1-23 is a signal peptide; sequence MHHQHGLFMLALLAFLLVMTVLG. Intrachain disulfides connect cysteine 41/cysteine 70, cysteine 49/cysteine 79, cysteine 56/cysteine 83, cysteine 93/cysteine 125, and cysteine 103/cysteine 135. Chondroitin sulfate binding regions lie at residues 86-93 and 117-125; these read KKQFGAEC and KRALHNAEC. A disordered region spans residues 136-161; the sequence is GKVTKPKLQESKKKKKEGKNKEKLLD. The tract at residues 141–161 is chondroitin sulfate A binding; that stretch reads PKLQESKKKKKEGKNKEKLLD.

Belongs to the pleiotrophin family. Expressed in high levels in brain and eye. Lower levels in bone. In the tailbud embryo stage, it is expressed exclusively in the central nervous system, especially in the hind region of the brain.

It localises to the secreted. In terms of biological role, secreted growth factor that mediates its signal through cell-surface proteoglycan and non-proteoglycan receptors. Binds cell-surface proteoglycan receptor via their chondroitin sulfate (CS) groups. Thereby regulates many processes like cell proliferation, cell survival, cell growth, cell differentiation and cell migration. Has antibacterial activity against both Gram-positive and Gram-negative bacteria. The sequence is that of Pleiotrophin-B (ptn-b) from Xenopus laevis (African clawed frog).